A 226-amino-acid polypeptide reads, in one-letter code: Cytochrome c-553I (226 aa).

A signal peptide spans 1–22; that stretch reads MTSKTTASLLAICVACAASAIA. A disordered region spans residues 43 to 68; it reads AAVSGDAHEQPAAEAPAEEEEETPAV. 4 residues coordinate heme: Cys125, Cys128, His129, and Met173. The disordered stretch occupies residues 203–226; that stretch reads RGRPAKREDKSDEFVAQEDSCMSG.

Post-translationally, binds 1 heme group per subunit.

The protein localises to the periplasm. This is Cytochrome c-553I (cycB) from Paracoccus denitrificans.